A 158-amino-acid polypeptide reads, in one-letter code: 2-C-methyl-D-erythritol 2,4-cyclodiphosphate synthase (158 aa).

The a divalent metal cation site is built by Asp9 and His11. Residues 9-11 and 35-36 each bind 4-CDP-2-C-methyl-D-erythritol 2-phosphate; these read DVH and HS. His43 provides a ligand contact to a divalent metal cation. 4-CDP-2-C-methyl-D-erythritol 2-phosphate contacts are provided by residues 57-59, 62-66, 101-107, 133-136, Phe140, and Arg143; these read DIG, FPDTD, AQKPKML, and TTTE.

This sequence belongs to the IspF family. Homotrimer. Requires a divalent metal cation as cofactor.

The enzyme catalyses 4-CDP-2-C-methyl-D-erythritol 2-phosphate = 2-C-methyl-D-erythritol 2,4-cyclic diphosphate + CMP. The protein operates within isoprenoid biosynthesis; isopentenyl diphosphate biosynthesis via DXP pathway; isopentenyl diphosphate from 1-deoxy-D-xylulose 5-phosphate: step 4/6. In terms of biological role, involved in the biosynthesis of isopentenyl diphosphate (IPP) and dimethylallyl diphosphate (DMAPP), two major building blocks of isoprenoid compounds. Catalyzes the conversion of 4-diphosphocytidyl-2-C-methyl-D-erythritol 2-phosphate (CDP-ME2P) to 2-C-methyl-D-erythritol 2,4-cyclodiphosphate (ME-CPP) with a corresponding release of cytidine 5-monophosphate (CMP). The chain is 2-C-methyl-D-erythritol 2,4-cyclodiphosphate synthase from Bacillus subtilis (strain 168).